We begin with the raw amino-acid sequence, 196 residues long: uncharacterized protein (196 aa).

The protein belongs to the flavoredoxin family. Requires FMN as cofactor.

This is an uncharacterized protein from Aquifex aeolicus (strain VF5).